Reading from the N-terminus, the 293-residue chain is Pyridoxal 5'-phosphate synthase subunit PdxS (293 aa).

Residue Asp23 participates in D-ribose 5-phosphate binding. Lys80 functions as the Schiff-base intermediate with D-ribose 5-phosphate in the catalytic mechanism. Gly152 contacts D-ribose 5-phosphate. Residue Arg164 coordinates D-glyceraldehyde 3-phosphate. D-ribose 5-phosphate-binding positions include Gly213 and Gly234–Ser235.

The protein belongs to the PdxS/SNZ family. In the presence of PdxT, forms a dodecamer of heterodimers.

It carries out the reaction aldehydo-D-ribose 5-phosphate + D-glyceraldehyde 3-phosphate + L-glutamine = pyridoxal 5'-phosphate + L-glutamate + phosphate + 3 H2O + H(+). It participates in cofactor biosynthesis; pyridoxal 5'-phosphate biosynthesis. In terms of biological role, catalyzes the formation of pyridoxal 5'-phosphate from ribose 5-phosphate (RBP), glyceraldehyde 3-phosphate (G3P) and ammonia. The ammonia is provided by the PdxT subunit. Can also use ribulose 5-phosphate and dihydroxyacetone phosphate as substrates, resulting from enzyme-catalyzed isomerization of RBP and G3P, respectively. This Chloroflexus aurantiacus (strain ATCC 29366 / DSM 635 / J-10-fl) protein is Pyridoxal 5'-phosphate synthase subunit PdxS.